The sequence spans 134 residues: uncharacterized protein (134 aa).

Residues 1-26 form the signal peptide; the sequence is MRLYKAMALCLPLVVICTSEVSQSTA. The interval 77–98 is disordered; that stretch reads GEKNEEVAGPVDGEGSEEEAFD.

This is an uncharacterized protein from Encephalitozoon cuniculi (strain GB-M1) (Microsporidian parasite).